Here is a 239-residue protein sequence, read N- to C-terminus: MAHRIIAQNRGKGGPTYRAPSHRYKAALRHAGKNDALVSGNVIDIEHDPARHAPIALARLDSGEKIYVLATEGLGVGDTVSWGTGGTVKNGNTLPLGEIPVGAYVCNIEARPNDGGKFVRSSGVQALVIGKADDGRVGIRMPSGKNKWFNGACMATVGIVAGGGRGEKPFVKAGKKHFHVRSSSERWPRVKGVCMNVIDHPFGGGGHQHCGRPKTVARGTSPGRKVGHVAARRTGKWKK.

The segment at 205–224 is disordered; sequence GGHQHCGRPKTVARGTSPGR.

This sequence belongs to the universal ribosomal protein uL2 family. As to quaternary structure, part of the 50S ribosomal subunit. Forms a bridge to the 30S subunit in the 70S ribosome.

Functionally, one of the primary rRNA binding proteins. Required for association of the 30S and 50S subunits to form the 70S ribosome, for tRNA binding and peptide bond formation. It has been suggested to have peptidyltransferase activity; this is somewhat controversial. Makes several contacts with the 16S rRNA in the 70S ribosome. This Methanoculleus marisnigri (strain ATCC 35101 / DSM 1498 / JR1) protein is Large ribosomal subunit protein uL2.